Reading from the N-terminus, the 259-residue chain is MDLVQIGSYTFSSRLILGTGKFGNTASMVDAVRASGTELVTVALRRFNREETDHDLFTTLADLDGITLMPNTSGASNAKEAVRAAHISRELSGSPFIKVEIHPNPQHLMPDPIETYEACKILAGEGFLVMPYIPADPVLAKRLEDVGCASVMPLGSSIGSGQGLATAGMIRLIIRESTIPVIVDAGLRSPSEACAAMEMGCTAVLVNSAIAVAQNPPEMAAAFAEAVQAGYRAKAAGIMPKSGSAIATSPLTSFLDTTS.

Lys98 serves as the catalytic Schiff-base intermediate with DXP. 1-deoxy-D-xylulose 5-phosphate-binding positions include Gly159, 185–186, and 207–208; these read AG and NS.

Belongs to the ThiG family. Homotetramer. Forms heterodimers with either ThiH or ThiS.

The protein resides in the cytoplasm. It carries out the reaction [ThiS sulfur-carrier protein]-C-terminal-Gly-aminoethanethioate + 2-iminoacetate + 1-deoxy-D-xylulose 5-phosphate = [ThiS sulfur-carrier protein]-C-terminal Gly-Gly + 2-[(2R,5Z)-2-carboxy-4-methylthiazol-5(2H)-ylidene]ethyl phosphate + 2 H2O + H(+). It functions in the pathway cofactor biosynthesis; thiamine diphosphate biosynthesis. Functionally, catalyzes the rearrangement of 1-deoxy-D-xylulose 5-phosphate (DXP) to produce the thiazole phosphate moiety of thiamine. Sulfur is provided by the thiocarboxylate moiety of the carrier protein ThiS. In vitro, sulfur can be provided by H(2)S. The protein is Thiazole synthase of Chlorobium phaeobacteroides (strain BS1).